Consider the following 276-residue polypeptide: Putative glycosyltransferase 6 domain-containing protein 1 (276 aa).

Residues 1–6 are Cytoplasmic-facing; that stretch reads MNSKRM. A helical; Signal-anchor for type II membrane protein membrane pass occupies residues 7-23; sequence LLLVLFAFSLMLVERYF. The Lumenal segment spans residues 24-276; the sequence is RNHQVEELRL…NKYFYLNKPT (253 aa). Asn-74 carries N-linked (GlcNAc...) asparagine glycosylation. Substrate contacts are provided by residues 82–87, 173–175, and 195–198; these read FATGRF, AAN, and HAWW. Glu-263 acts as the Nucleophile in catalysis.

Belongs to the glycosyltransferase 6 family. Mn(2+) is required as a cofactor. Expressed in both healthy and inflamed gingival tissue samples at similar levels, with higher expression in the gingival connective tissue compared to gingival epithelium. Strongest expression in testis, followed by leukocytes.

The protein localises to the membrane. The protein is Putative glycosyltransferase 6 domain-containing protein 1 (GLT6D1) of Homo sapiens (Human).